The following is a 421-amino-acid chain: NADH-dependent phenylglyoxylate dehydrogenase subunit epsilon (421 aa).

Residues 15–18 (SSHA), 39–40 (TR), and 279–297 (ATAQ…NAIL) each bind FAD.

It belongs to the FAD-dependent oxidoreductase family. In terms of assembly, dimer of heteropentamers composed of an alpha (PadG), a beta (PadI), a gamma (PadE), a delta (PadF) and an epsilon (PadH) subunit. FAD is required as a cofactor.

It catalyses the reaction phenylglyoxylate + NAD(+) + CoA = benzoyl-CoA + CO2 + NADH. Activated by magnesium ions and thiamine diphosphate. In terms of biological role, involved in the anaerobic metabolism of phenylalanine and phenylacetate. Catalyzes the oxidative decarboxylation of phenylglyoxylate to benzoyl-CoA and CO(2). It can also react slowly with 2-oxo-3-methylbutanoate and use different electron acceptors such as benzyl viologen, methyl viologen, FAD or FMN, but NAD seems to be the physiological electron acceptor. Also catalyzes an isotope exchange between CO(2) and the carboxyl group which proves partial or complete reversibility of the oxidative decarboxylation reaction. The polypeptide is NADH-dependent phenylglyoxylate dehydrogenase subunit epsilon (padH) (Aromatoleum evansii (Azoarcus evansii)).